Reading from the N-terminus, the 555-residue chain is Chaperonin GroEL (555 aa).

Residues 29 to 32 (TLGP), Lys50, 86 to 90 (DGTTT), Gly418, and Asp499 each bind ATP. The disordered stretch occupies residues 528–555 (HEEDNNTGNRSGGGVGGGHHGGMGGMDF). Positions 537 to 555 (RSGGGVGGGHHGGMGGMDF) are enriched in gly residues.

This sequence belongs to the chaperonin (HSP60) family. In terms of assembly, forms a cylinder of 14 subunits composed of two heptameric rings stacked back-to-back. Interacts with the co-chaperonin GroES.

It localises to the cytoplasm. It carries out the reaction ATP + H2O + a folded polypeptide = ADP + phosphate + an unfolded polypeptide.. Together with its co-chaperonin GroES, plays an essential role in assisting protein folding. The GroEL-GroES system forms a nano-cage that allows encapsulation of the non-native substrate proteins and provides a physical environment optimized to promote and accelerate protein folding. This Orientia tsutsugamushi (Rickettsia tsutsugamushi) protein is Chaperonin GroEL.